We begin with the raw amino-acid sequence, 255 residues long: HLA class II histocompatibility antigen, DQ alpha 2 chain (255 aa).

A signal peptide spans 1 to 23; sequence MILNKALLLGALALTAVMSPCGG. The tract at residues 24–110 is alpha-1; the sequence is EDIVADHVAS…RQSNSTAATN (87 aa). Topologically, residues 24 to 217 are extracellular; that stretch reads EDIVADHVAS…IPAPMSELTE (194 aa). Residues asparagine 104 and asparagine 144 are each glycosylated (N-linked (GlcNAc...) asparagine). Residues 111–204 are alpha-2; sequence EVPEVTVFSK…GLDEPLLKHW (94 aa). Positions 113–205 constitute an Ig-like C1-type domain; sequence PEVTVFSKFP…LDEPLLKHWE (93 aa). A disulfide bridge connects residues cysteine 133 and cysteine 189. The segment at 205-217 is connecting peptide; the sequence is EPEIPAPMSELTE. The helical transmembrane segment at 218–240 threads the bilayer; the sequence is TLVCALGLSVGLMGIVVGTVFII. Residues 241–255 are Cytoplasmic-facing; it reads QGLRSVGASRHQGLL.

It belongs to the MHC class II family. As to quaternary structure, heterodimer of an alpha and a beta subunit; also referred as MHC class II molecule. Dimer formation with HLA-DQB2, but not with HLA-DQB1, is required for efficient exit from the endoplasmic reticulum (ER). In the ER, forms a heterononamer; 3 MHC class II molecules bind to a CD74 homotrimer (also known as invariant chain or HLA class II histocompatibility antigen gamma chain). In the endosomal/lysosomal system; CD74 undergoes sequential degradation by various proteases; leaving a small fragment termed CLIP on each MHC class II molecule. MHC class II molecule interacts with HLA_DM, and HLA_DO in B-cells, in order to release CLIP and facilitate the binding of antigenic peptides. Association with HLA-DMA also occurs in skin Langerhans cells, in post-Golgi compartments. In terms of tissue distribution, restricted to skin Langerhans cells, although some expression at low levels may occur at the surface of B lymphoblastoid cells.

Its subcellular location is the cell membrane. The protein localises to the endoplasmic reticulum membrane. It is found in the golgi apparatus. It localises to the trans-Golgi network membrane. The protein resides in the endosome membrane. Its subcellular location is the lysosome membrane. Functionally, binds peptides derived from antigens that access the endocytic route of antigen presenting cells (APC) and presents them on the cell surface for recognition by the CD4 T-cells. The peptide binding cleft accommodates peptides of 10-30 residues. The peptides presented by MHC class II molecules are generated mostly by degradation of proteins that access the endocytic route, where they are processed by lysosomal proteases and other hydrolases. Exogenous antigens that have been endocytosed by the APC are thus readily available for presentation via MHC II molecules, and for this reason this antigen presentation pathway is usually referred to as exogenous. As membrane proteins on their way to degradation in lysosomes as part of their normal turn-over are also contained in the endosomal/lysosomal compartments, exogenous antigens must compete with those derived from endogenous components. Autophagy is also a source of endogenous peptides, autophagosomes constitutively fuse with MHC class II loading compartments. In addition to APCs, other cells of the gastrointestinal tract, such as epithelial cells, express MHC class II molecules and CD74 and act as APCs, which is an unusual trait of the GI tract. To produce a MHC class II molecule that presents an antigen, three MHC class II molecules (heterodimers of an alpha and a beta chain) associate with a CD74 trimer in the ER to form a heterononamer. Soon after the entry of this complex into the endosomal/lysosomal system where antigen processing occurs, CD74 undergoes a sequential degradation by various proteases, including CTSS and CTSL, leaving a small fragment termed CLIP (class-II-associated invariant chain peptide). The removal of CLIP is facilitated by HLA-DM via direct binding to the alpha-beta-CLIP complex so that CLIP is released. HLA-DM stabilizes MHC class II molecules until primary high affinity antigenic peptides are bound. The MHC II molecule bound to a peptide is then transported to the cell membrane surface. In B-cells, the interaction between HLA-DM and MHC class II molecules is regulated by HLA-DO. Primary dendritic cells (DCs) also to express HLA-DO. Lysosomal microenvironment has been implicated in the regulation of antigen loading into MHC II molecules, increased acidification produces increased proteolysis and efficient peptide loading. The sequence is that of HLA class II histocompatibility antigen, DQ alpha 2 chain (HLA-DQA2) from Homo sapiens (Human).